Reading from the N-terminus, the 132-residue chain is Pre-histone-like nucleoprotein (132 aa).

The propeptide occupies 2 to 23 (AILISPSNNTGWGLGTHKLFGG). A Nuclear localization signal motif is present at residues 124–132 (RRKRRVRSK).

The protein belongs to the adenoviridae histone-like nucleoprotein family. In terms of assembly, interacts with the core-capsid bridging protein; this interaction bridges the virus core to the capsid. Interacts with host NPM1; this interaction might play a role in placing the pre-histone-like nucleoprotein on the viral DNA or regulating viral gene expression. Interacts with host HMGB1; this interaction inhibits host immune response. Post-translationally, cleaved near the N-terminus by the viral protease during virion maturation to form the mature protein.

The protein resides in the virion. It is found in the host nucleus. It localises to the host nucleolus. In terms of biological role, plays a role in the inhibition of host immune response within the nucleus. Interacts with cellular nucleosomes and immobilizes the host immune danger signal HMGB1 on chromatin. In turn, prevents HMGB1 release out of the cell and thus decreases inflammation. Also plays a role in the wrapping and condensation of the viral DNA. May also promote viral genome import into the nucleus. The polypeptide is Pre-histone-like nucleoprotein (Canine adenovirus serotype 1 (strain RI261) (CAdV-1)).